The following is a 400-amino-acid chain: Enoyl-[acyl-carrier-protein] reductase [NADH] (400 aa).

Residues 48 to 53, 74 to 75, 111 to 112, and 139 to 140 each bind NAD(+); these read GSSSGY, FE, DA, and LA. Position 225 (Tyr-225) interacts with substrate. Residue Tyr-235 is the Proton donor of the active site. NAD(+) contacts are provided by residues Lys-244 and 273 to 275; that span reads VVT.

Belongs to the TER reductase family. In terms of assembly, monomer.

It catalyses the reaction a 2,3-saturated acyl-[ACP] + NAD(+) = a (2E)-enoyl-[ACP] + NADH + H(+). It functions in the pathway lipid metabolism; fatty acid biosynthesis. Involved in the final reduction of the elongation cycle of fatty acid synthesis (FAS II). Catalyzes the reduction of a carbon-carbon double bond in an enoyl moiety that is covalently linked to an acyl carrier protein (ACP). The chain is Enoyl-[acyl-carrier-protein] reductase [NADH] from Shewanella pealeana (strain ATCC 700345 / ANG-SQ1).